The following is a 220-amino-acid chain: Probable GTP-binding protein EngB (220 aa).

Residues 26–200 (EGIEIAFAGR…RAKLDEWYAP (175 aa)) enclose the EngB-type G domain. GTP-binding positions include 34–41 (GRSNTGKS), 61–65 (GRTQL), 79–82 (DLPG), 146–149 (TKAD), and 179–181 (FSS). Mg(2+)-binding residues include Ser41 and Thr63.

Belongs to the TRAFAC class TrmE-Era-EngA-EngB-Septin-like GTPase superfamily. EngB GTPase family. The cofactor is Mg(2+).

Necessary for normal cell division and for the maintenance of normal septation. This is Probable GTP-binding protein EngB from Vibrio cholerae serotype O1 (strain ATCC 39541 / Classical Ogawa 395 / O395).